The following is a 190-amino-acid chain: Threonylcarbamoyl-AMP synthase (190 aa).

Residues 7–190 (GDAIAAAIDV…ALTGELFRQG (184 aa)) enclose the YrdC-like domain.

This sequence belongs to the SUA5 family. TsaC subfamily.

The protein resides in the cytoplasm. The enzyme catalyses L-threonine + hydrogencarbonate + ATP = L-threonylcarbamoyladenylate + diphosphate + H2O. Functionally, required for the formation of a threonylcarbamoyl group on adenosine at position 37 (t(6)A37) in tRNAs that read codons beginning with adenine. Catalyzes the conversion of L-threonine, HCO(3)(-)/CO(2) and ATP to give threonylcarbamoyl-AMP (TC-AMP) as the acyladenylate intermediate, with the release of diphosphate. In Escherichia coli O6:H1 (strain CFT073 / ATCC 700928 / UPEC), this protein is Threonylcarbamoyl-AMP synthase.